The sequence spans 708 residues: Protein SUPPRESSOR OF MAX2 1A (708 aa).

Positions 248–283 (QMASKPQEKAASPPGSPVRTDLVLGPKQTETTPEKT) are disordered. The EAR signature appears at 537-541 (FDLNE).

This sequence belongs to the ClpA/ClpB family.

Probable component of a transcriptional corepressor complex that acts downstream of MAX2 to negatively regulate karrikins/strigolactone responses. Involved in the (-)-germacrene D signaling pathway influencing plant fitness and occurring in the stigma in a KAI2IA-dependent manner. The sequence is that of Protein SUPPRESSOR OF MAX2 1A from Petunia hybrida (Petunia).